The chain runs to 1025 residues: Beta-galactosidase (1025 aa).

Glutamate 482 acts as the Proton donor in catalysis. Glutamate 551 serves as the catalytic Nucleophile.

It belongs to the glycosyl hydrolase 2 family.

It carries out the reaction Hydrolysis of terminal non-reducing beta-D-galactose residues in beta-D-galactosides.. The sequence is that of Beta-galactosidase (LAC4) from Kluyveromyces lactis (strain ATCC 8585 / CBS 2359 / DSM 70799 / NBRC 1267 / NRRL Y-1140 / WM37) (Yeast).